A 792-amino-acid polypeptide reads, in one-letter code: Probable phosphoketolase (792 aa).

The protein belongs to the XFP family. The cofactor is thiamine diphosphate.

The chain is Probable phosphoketolase from Brucella melitensis biotype 1 (strain ATCC 23456 / CCUG 17765 / NCTC 10094 / 16M).